A 366-amino-acid chain; its full sequence is tRNA/tmRNA (uracil-C(5))-methyltransferase (366 aa).

Residues glutamine 190, tyrosine 218, asparagine 223, glutamate 239, and aspartate 299 each contribute to the S-adenosyl-L-methionine site. Catalysis depends on cysteine 324, which acts as the Nucleophile. Glutamate 358 functions as the Proton acceptor in the catalytic mechanism.

The protein belongs to the class I-like SAM-binding methyltransferase superfamily. RNA M5U methyltransferase family. TrmA subfamily.

It carries out the reaction uridine(54) in tRNA + S-adenosyl-L-methionine = 5-methyluridine(54) in tRNA + S-adenosyl-L-homocysteine + H(+). The catalysed reaction is uridine(341) in tmRNA + S-adenosyl-L-methionine = 5-methyluridine(341) in tmRNA + S-adenosyl-L-homocysteine + H(+). Functionally, dual-specificity methyltransferase that catalyzes the formation of 5-methyluridine at position 54 (m5U54) in all tRNAs, and that of position 341 (m5U341) in tmRNA (transfer-mRNA). This is tRNA/tmRNA (uracil-C(5))-methyltransferase from Salmonella paratyphi B (strain ATCC BAA-1250 / SPB7).